Consider the following 599-residue polypeptide: Elongation factor 4 (599 aa).

The tr-type G domain occupies 4-186 (KFIRNFSIIA…AIIKHVPPPL (183 aa)). Residues 16–21 (DHGKST) and 133–136 (NKID) contribute to the GTP site.

It belongs to the TRAFAC class translation factor GTPase superfamily. Classic translation factor GTPase family. LepA subfamily.

The protein localises to the cell membrane. The catalysed reaction is GTP + H2O = GDP + phosphate + H(+). In terms of biological role, required for accurate and efficient protein synthesis under certain stress conditions. May act as a fidelity factor of the translation reaction, by catalyzing a one-codon backward translocation of tRNAs on improperly translocated ribosomes. Back-translocation proceeds from a post-translocation (POST) complex to a pre-translocation (PRE) complex, thus giving elongation factor G a second chance to translocate the tRNAs correctly. Binds to ribosomes in a GTP-dependent manner. This Ureaplasma urealyticum serovar 10 (strain ATCC 33699 / Western) protein is Elongation factor 4.